Here is a 2344-residue protein sequence, read N- to C-terminus: Peroxide stress-activated histidine kinase mak3 (2344 aa).

In terms of domain architecture, Protein kinase spans 1 to 295; sequence MYSQHELRNK…GIVNDLEACL (295 aa). Ser12, Ser16, and Ser17 each carry phosphoserine. Positions 486 to 503 are enriched in polar residues; that stretch reads SGNTRKTSLLGSNHSSYS. The interval 486-506 is disordered; sequence SGNTRKTSLLGSNHSSYSDKL. 2 TPR repeats span residues 829-862 and 1340-1373; these read CHYL…IPHE and AFAF…YAAL. The PAC domain occupies 1730-1781; that stretch reads FELEIRIKRKDGVYRWNLTRCTPTTNEKNRTSFLCATIDIDDQKKARATALE. A Histidine kinase domain is found at 1792–2018; that stretch reads NISHELRTPF…TFKICYDLKI (227 aa). His1795 is modified (phosphohistidine; by autocatalysis). One can recognise a Response regulatory domain in the interval 2211–2333; it reads KILIAEDNPI…TLIKMLLQYL (123 aa). Residue Asp2263 is modified to 4-aspartylphosphate.

Its subcellular location is the cytoplasm. It catalyses the reaction ATP + protein L-histidine = ADP + protein N-phospho-L-histidine.. Functionally, involved in the control of the SAPK-dependent transcriptional response to peroxide stress. Regulates sty1 activity. This Schizosaccharomyces pombe (strain 972 / ATCC 24843) (Fission yeast) protein is Peroxide stress-activated histidine kinase mak3 (mak3).